The chain runs to 300 residues: 3-methyl-2-oxobutanoate hydroxymethyltransferase (300 aa).

Residues Asp-75 and Asp-118 each coordinate Mg(2+). 3-methyl-2-oxobutanoate-binding positions include 75 to 76, Asp-118, and Lys-147; that span reads DS. Glu-149 is a binding site for Mg(2+). Glu-216 acts as the Proton acceptor in catalysis.

It belongs to the PanB family. Homodecamer; pentamer of dimers. Mg(2+) is required as a cofactor.

The protein resides in the cytoplasm. It carries out the reaction 3-methyl-2-oxobutanoate + (6R)-5,10-methylene-5,6,7,8-tetrahydrofolate + H2O = 2-dehydropantoate + (6S)-5,6,7,8-tetrahydrofolate. It participates in cofactor biosynthesis; (R)-pantothenate biosynthesis; (R)-pantoate from 3-methyl-2-oxobutanoate: step 1/2. Catalyzes the reversible reaction in which hydroxymethyl group from 5,10-methylenetetrahydrofolate is transferred onto alpha-ketoisovalerate to form ketopantoate. This Verminephrobacter eiseniae (strain EF01-2) protein is 3-methyl-2-oxobutanoate hydroxymethyltransferase.